Consider the following 141-residue polypeptide: Succinate dehydrogenase [ubiquinone] cytochrome b small subunit 2 (141 aa).

The transit peptide at 1-24 directs the protein to the mitochondrion; it reads MSLIRCTTSKALKFRQLLKMAART. The Mitochondrial matrix segment spans residues 25-44; it reads SVTTPVSREPFSIEDHSLHF. Residues 45-63 traverse the membrane as a helical segment; it reads KIERYWAAGMIPLIPTAYF. The Mitochondrial intermembrane portion of the chain corresponds to 64 to 68; sequence IHTPA. The chain crosses the membrane as a helical span at residues 69–89; it reads MDAVLTVAIVLHVHWGIAGVV. His-80 contacts heme b. Topologically, residues 90-104 are mitochondrial matrix; it reads SDYARPFVIGDTLAR. Tyr-92 lines the a ubiquinone pocket. The chain crosses the membrane as a helical span at residues 105 to 126; it reads VARASVYIITVILLASLLHFNN. The Mitochondrial intermembrane segment spans residues 127–141; that stretch reads SDVGLTKAFEMVWSL.

This sequence belongs to the CybS family. Component of the mitochondrial electron transport chain complex II composed of four subunits: a flavoprotein (Fp), an iron-sulfur protein (Ip), and a large cytochrome b (CybL) subunit and a small cytochrome b (CybS) subunit. There are 2 developmental stage-specific forms of complex II which have the Ip and CybL subunits in common. Complex II from the free-living larvae (aerobic environment) acts as a succinate dehydrogenase and is composed of the common subunit Ip and CybL and the stage specific subunits FpL and CybSL. Complex II from parasitic larvae and adults (anaerobic environment) acts as a fumarate reductase and is composed of the common subunit Ip and CybL and the stage specific subunits FpA and CybSA. It depends on heme b as a cofactor.

The protein resides in the mitochondrion inner membrane. The protein operates within carbohydrate metabolism; tricarboxylic acid cycle; fumarate from succinate (eukaryal route): step 1/1. In terms of biological role, membrane-bound small subunit (CybS) of the mitochondrial electron transport chain complex II, which together with the membrane-bound large subunit (CybL), anchor the catalytic subunits to the inner mitochondria membrane. During the free-living egg-larvae stages, which occur in an aerobic environment, complex II acts as a succinate dehydrogenase by transferring electrons from succinate to ubiquinone. The protein is Succinate dehydrogenase [ubiquinone] cytochrome b small subunit 2 of Ascaris suum (Pig roundworm).